The following is a 128-amino-acid chain: Sulfurtransferase TusD (128 aa).

The active-site Cysteine persulfide intermediate is C78.

The protein belongs to the DsrE/TusD family. As to quaternary structure, heterohexamer, formed by a dimer of trimers. The hexameric TusBCD complex contains 2 copies each of TusB, TusC and TusD. The TusBCD complex interacts with TusE.

The protein localises to the cytoplasm. Its function is as follows. Part of a sulfur-relay system required for 2-thiolation of 5-methylaminomethyl-2-thiouridine (mnm(5)s(2)U) at tRNA wobble positions. Accepts sulfur from TusA and transfers it in turn to TusE. The chain is Sulfurtransferase TusD from Salmonella agona (strain SL483).